Consider the following 213-residue polypeptide: StAR-related lipid transfer protein 5 (213 aa).

An START domain is found at 1 to 213 (MDPSWATQES…LQKAVRKFHH (213 aa)).

In terms of tissue distribution, expressed in most tissues, with highest levels in liver and in kidney.

Functionally, may be involved in the intracellular transport of sterols or other lipids. May bind cholesterol or other sterols. The chain is StAR-related lipid transfer protein 5 (Stard5) from Mus musculus (Mouse).